A 105-amino-acid polypeptide reads, in one-letter code: Small ribosomal subunit protein uS10 (105 aa).

Belongs to the universal ribosomal protein uS10 family. Part of the 30S ribosomal subunit.

Its function is as follows. Involved in the binding of tRNA to the ribosomes. The polypeptide is Small ribosomal subunit protein uS10 (Nitratidesulfovibrio vulgaris (strain DSM 19637 / Miyazaki F) (Desulfovibrio vulgaris)).